We begin with the raw amino-acid sequence, 324 residues long: Probable UDP-sugar transporter protein SLC35A4 (324 aa).

The Cytoplasmic segment spans residues 1-18; sequence MSVEDGGVPGLARPRQAR. Residues 19–39 form a helical membrane-spanning segment; the sequence is WTLLLFLSTAMYGAHAPFLAL. Residues 40–52 lie on the Lumenal side of the membrane; that stretch reads CHVDGRVPFRPSS. The helical transmembrane segment at 53–73 threads the bilayer; sequence AVLLTELTKLLLCAFSLLVGW. At 74–85 the chain is on the cytoplasmic side; that stretch reads QTWPQGTPPWRQ. Residues 86–106 traverse the membrane as a helical segment; sequence AVPFALSALLYGANNNLVIYL. The Lumenal portion of the chain corresponds to 107 to 142; the sequence is QRYMDPSTYQVLSNLKIGSTALLYCLCLGHRLSARQ. Residues 143-163 form a helical membrane-spanning segment; it reads GLALLLLMAAGACYASGGFQE. At 164–180 the chain is on the cytoplasmic side; the sequence is PVNTLPGPASAAGAHPM. Residues 181-201 form a helical membrane-spanning segment; the sequence is PLHITPLGLLLLILYCLISGL. Residues 202–214 lie on the Lumenal side of the membrane; the sequence is SSVYTELIMKRQR. A helical membrane pass occupies residues 215–235; that stretch reads LPLALQNLFLYTFGVILNFGL. The Cytoplasmic portion of the chain corresponds to 236-248; sequence YAGSGPGPGFLEG. The helical transmembrane segment at 249-271 threads the bilayer; that stretch reads FSGWAVLVVLNQAVNGLLMSAVM. Residues 272-279 lie on the Lumenal side of the membrane; the sequence is KHGSSITR. The helical transmembrane segment at 280 to 300 threads the bilayer; the sequence is LFIVSCSLVVNAVLSAVLLQL. Over 301–324 the chain is Cytoplasmic; the sequence is QLTAIFFLAALLIGLAVCLYYGSP.

This sequence belongs to the nucleotide-sugar transporter family. SLC35A subfamily. As to quaternary structure, found in a complex with SLC35A2 and SLC35A3.

The protein localises to the golgi apparatus membrane. It carries out the reaction CDP-L-ribitol(in) + CDP(out) = CDP-L-ribitol(out) + CDP(in). Mediates the transport of CDP-ribitol. Does not exhibit CMP-sialic acid, UDP-galactose and UDP-N-acetylglucosamine transport activity. This is Probable UDP-sugar transporter protein SLC35A4 from Mus musculus (Mouse).